A 266-amino-acid chain; its full sequence is GATA-type zinc finger protein 1 (266 aa).

3 disordered regions span residues 1–31 (MEAAQAGDLTRRQELLAPPCLDTESLRKSRP), 106–129 (TQCPNLEISSATSPASLQRRPRKQ), and 171–191 (CSQKLPASPSKALASPGSSEA). The segment covering 106–121 (TQCPNLEISSATSPAS) has biased composition (polar residues). A GATA-type zinc finger spans residues 197–221 (CASCRTQRTPLWRDAEDGTPLCNAC).

As to expression, specifically expressed in adult testis and ovary. Expressed at high levels in the somatic cells of the developing gonads, including Leydig cells in the testes and granulosa cells in the ovaries.

The protein localises to the nucleus. In terms of biological role, transcriptional regulator that plays a key role in germ cell development. Determines the oogenic fate by activating key genes for the oogenic program and meiotic prophase entry. Acts downstream of bone morphogenetic protein (BMP) by regulating expression of genes required for the oogenic programs, which are repressed by Polycomb activities in sexually uncommitted germ cells. Regulates expression of STRA8, a central downstream effector for the meiotic program. Acts independently of retinoic acid (RA). In males, not required for germ-cell sex determination, but required to allow the spermatogonia to efficiently accomplish the meiotic prophase. The chain is GATA-type zinc finger protein 1 from Mus musculus (Mouse).